The chain runs to 303 residues: Acetylglutamate kinase (303 aa).

Residues 69 to 70 (GG), R91, and N201 contribute to the substrate site.

This sequence belongs to the acetylglutamate kinase family. ArgB subfamily.

Its subcellular location is the cytoplasm. It catalyses the reaction N-acetyl-L-glutamate + ATP = N-acetyl-L-glutamyl 5-phosphate + ADP. It functions in the pathway amino-acid biosynthesis; L-arginine biosynthesis; N(2)-acetyl-L-ornithine from L-glutamate: step 2/4. Its function is as follows. Catalyzes the ATP-dependent phosphorylation of N-acetyl-L-glutamate. The protein is Acetylglutamate kinase of Novosphingobium aromaticivorans (strain ATCC 700278 / DSM 12444 / CCUG 56034 / CIP 105152 / NBRC 16084 / F199).